A 787-amino-acid chain; its full sequence is Endonuclease MutS2 (787 aa).

Position 335–342 (335–342 (GPNTGGKT)) interacts with ATP. Residues 712–787 (LDLRGERYED…GLGNTVIELK (76 aa)) enclose the Smr domain.

It belongs to the DNA mismatch repair MutS family. MutS2 subfamily. Homodimer. Binds to stalled ribosomes, contacting rRNA.

Its function is as follows. Endonuclease that is involved in the suppression of homologous recombination and thus may have a key role in the control of bacterial genetic diversity. In terms of biological role, acts as a ribosome collision sensor, splitting the ribosome into its 2 subunits. Detects stalled/collided 70S ribosomes which it binds and splits by an ATP-hydrolysis driven conformational change. Acts upstream of the ribosome quality control system (RQC), a ribosome-associated complex that mediates the extraction of incompletely synthesized nascent chains from stalled ribosomes and their subsequent degradation. Probably generates substrates for RQC. This is Endonuclease MutS2 from Shouchella clausii (strain KSM-K16) (Alkalihalobacillus clausii).